The primary structure comprises 2513 residues: Probable polyketide synthase 7 (2513 aa).

The Ketosynthase family 3 (KS3) domain maps to 11–441 (EKGVAIVGIG…GSNCCLLISE (431 aa)). Catalysis depends on for beta-ketoacyl synthase activity residues Cys-181, His-323, and His-362. An acyl/malonyl transferase region spans residues 632 to 665 (GVNPSFILGHSLGEISASYCSGMIDLDTFCYTVY). Residue Ser-642 is the For acyl/malonyl transferase activity of the active site. Positions 922–1044 (IDHLGISNSF…SNFQLLDHGN (123 aa)) are N-terminal hotdog fold. The region spanning 922–1206 (IDHLGISNSF…CKSLIPIKDS (285 aa)) is the PKS/mFAS DH domain. Residue His-956 is the Proton acceptor; for dehydratase activity of the active site. The interval 1061–1206 (NLSKLTKNEL…CKSLIPIKDS (146 aa)) is C-terminal hotdog fold. Residue Asp-1119 is the Proton donor; for dehydratase activity of the active site. Residues 2426–2503 (IGNKNIDELF…ISIKMILNSL (78 aa)) enclose the Carrier domain. Ser-2463 bears the O-(pantetheine 4'-phosphoryl)serine mark.

Requires pantetheine 4'-phosphate as cofactor.

Probable polyketide synthase. The protein is Probable polyketide synthase 7 (pks7) of Dictyostelium discoideum (Social amoeba).